A 135-amino-acid chain; its full sequence is Ribonuclease P protein component (135 aa).

Positions 115 to 135 are disordered; it reads ETEPVSPVSPTSLPQNERGSP. Over residues 122-135 the composition is skewed to polar residues; the sequence is VSPTSLPQNERGSP.

This sequence belongs to the RnpA family. Consists of a catalytic RNA component (M1 or rnpB) and a protein subunit.

It carries out the reaction Endonucleolytic cleavage of RNA, removing 5'-extranucleotides from tRNA precursor.. RNaseP catalyzes the removal of the 5'-leader sequence from pre-tRNA to produce the mature 5'-terminus. It can also cleave other RNA substrates such as 4.5S RNA. The protein component plays an auxiliary but essential role in vivo by binding to the 5'-leader sequence and broadening the substrate specificity of the ribozyme. The polypeptide is Ribonuclease P protein component (Chloroflexus aggregans (strain MD-66 / DSM 9485)).